A 273-amino-acid chain; its full sequence is Dermonecrotic toxin LhSicTox-alphaIA2avi (273 aa).

The active site involves H5. The Mg(2+) site is built by E25 and D27. The active-site Nucleophile is the H41. Cystine bridges form between C45–C51 and C47–C190. Position 85 (D85) interacts with Mg(2+).

The protein belongs to the arthropod phospholipase D family. Class II subfamily. Mg(2+) serves as cofactor. Expressed by the venom gland.

It localises to the secreted. The catalysed reaction is an N-(acyl)-sphingosylphosphocholine = an N-(acyl)-sphingosyl-1,3-cyclic phosphate + choline. The enzyme catalyses an N-(acyl)-sphingosylphosphoethanolamine = an N-(acyl)-sphingosyl-1,3-cyclic phosphate + ethanolamine. It catalyses the reaction a 1-acyl-sn-glycero-3-phosphocholine = a 1-acyl-sn-glycero-2,3-cyclic phosphate + choline. It carries out the reaction a 1-acyl-sn-glycero-3-phosphoethanolamine = a 1-acyl-sn-glycero-2,3-cyclic phosphate + ethanolamine. Functionally, dermonecrotic toxins cleave the phosphodiester linkage between the phosphate and headgroup of certain phospholipids (sphingolipid and lysolipid substrates), forming an alcohol (often choline) and a cyclic phosphate. This toxin acts on sphingomyelin (SM). It may also act on ceramide phosphoethanolamine (CPE), lysophosphatidylcholine (LPC) and lysophosphatidylethanolamine (LPE), but not on lysophosphatidylserine (LPS), and lysophosphatidylglycerol (LPG). It acts by transphosphatidylation, releasing exclusively cyclic phosphate products as second products. Induces dermonecrosis, hemolysis, increased vascular permeability, edema, inflammatory response, and platelet aggregation. In Loxosceles hirsuta (Recluse spider), this protein is Dermonecrotic toxin LhSicTox-alphaIA2avi.